The following is a 519-amino-acid chain: Putative cysteine ligase BshC (519 aa).

2 coiled-coil regions span residues 51–71 and 440–464; these read LNALVDELMRQNPRLNDSLKE and TKLNKQLQLAVETIVDQKRRLHEQA.

It belongs to the BshC family.

Functionally, involved in bacillithiol (BSH) biosynthesis. May catalyze the last step of the pathway, the addition of cysteine to glucosamine malate (GlcN-Mal) to generate BSH. The protein is Putative cysteine ligase BshC of Exiguobacterium sibiricum (strain DSM 17290 / CCUG 55495 / CIP 109462 / JCM 13490 / 255-15).